A 283-amino-acid chain; its full sequence is Nudix hydrolase 6 (283 aa).

The 133-residue stretch at Ser101–Asn233 folds into the Nudix hydrolase domain. The Nudix box signature appears at Gly139–Gly160. A divalent metal cation-binding residues include Glu154, Glu158, and Glu204.

It belongs to the Nudix hydrolase family. It depends on Mg(2+) as a cofactor. The cofactor is Mn(2+). Expressed in stems and leaves. Weakly or not expressed in roots.

The enzyme catalyses ADP-D-ribose + H2O = D-ribose 5-phosphate + AMP + 2 H(+). It catalyses the reaction NAD(+) + H2O = beta-nicotinamide D-ribonucleotide + AMP + 2 H(+). It carries out the reaction NADH + H2O = reduced beta-nicotinamide D-ribonucleotide + AMP + 2 H(+). Probably mediates the hydrolysis of some nucleoside diphosphate derivatives. In vitro, it can use both NADH and ADP-ribose as substrates; however the relevance of such substrates in vivo is unclear. The protein is Nudix hydrolase 6 of Arabidopsis thaliana (Mouse-ear cress).